A 135-amino-acid polypeptide reads, in one-letter code: Small ribosomal subunit protein uS12 (135 aa).

3-methylthioaspartic acid is present on D89. The tract at residues 108 to 135 (NKRTVSRSKYGTKKAKATDKKATDNKKK) is disordered. Residues 111-122 (TVSRSKYGTKKA) show a composition bias toward basic residues. The segment covering 123-135 (KATDKKATDNKKK) has biased composition (basic and acidic residues).

The protein belongs to the universal ribosomal protein uS12 family. In terms of assembly, part of the 30S ribosomal subunit. Contacts proteins S8 and S17. May interact with IF1 in the 30S initiation complex.

Its function is as follows. With S4 and S5 plays an important role in translational accuracy. In terms of biological role, interacts with and stabilizes bases of the 16S rRNA that are involved in tRNA selection in the A site and with the mRNA backbone. Located at the interface of the 30S and 50S subunits, it traverses the body of the 30S subunit contacting proteins on the other side and probably holding the rRNA structure together. The combined cluster of proteins S8, S12 and S17 appears to hold together the shoulder and platform of the 30S subunit. In Helicobacter pylori (strain P12), this protein is Small ribosomal subunit protein uS12.